A 249-amino-acid polypeptide reads, in one-letter code: tRNA pseudouridine synthase A (249 aa).

The active-site Nucleophile is Asp-53. Tyr-111 lines the substrate pocket.

Belongs to the tRNA pseudouridine synthase TruA family. In terms of assembly, homodimer.

It catalyses the reaction uridine(38/39/40) in tRNA = pseudouridine(38/39/40) in tRNA. Formation of pseudouridine at positions 38, 39 and 40 in the anticodon stem and loop of transfer RNAs. The protein is tRNA pseudouridine synthase A of Streptococcus gordonii (strain Challis / ATCC 35105 / BCRC 15272 / CH1 / DL1 / V288).